Consider the following 285-residue polypeptide: Pantothenate synthetase (285 aa).

30–37 lines the ATP pocket; the sequence is MGNLHQGH. Histidine 37 (proton donor) is an active-site residue. Residue glutamine 61 coordinates (R)-pantoate. Residue glutamine 61 coordinates beta-alanine. An ATP-binding site is contributed by 149 to 152; it reads GQKD. Glutamine 155 is a binding site for (R)-pantoate. Residues valine 178 and 186–189 each bind ATP; that span reads LSSR.

This sequence belongs to the pantothenate synthetase family. As to quaternary structure, homodimer.

It localises to the cytoplasm. The enzyme catalyses (R)-pantoate + beta-alanine + ATP = (R)-pantothenate + AMP + diphosphate + H(+). Its pathway is cofactor biosynthesis; (R)-pantothenate biosynthesis; (R)-pantothenate from (R)-pantoate and beta-alanine: step 1/1. In terms of biological role, catalyzes the condensation of pantoate with beta-alanine in an ATP-dependent reaction via a pantoyl-adenylate intermediate. This is Pantothenate synthetase from Aeromonas hydrophila subsp. hydrophila (strain ATCC 7966 / DSM 30187 / BCRC 13018 / CCUG 14551 / JCM 1027 / KCTC 2358 / NCIMB 9240 / NCTC 8049).